A 526-amino-acid polypeptide reads, in one-letter code: Bifunctional purine biosynthesis protein PurH (526 aa).

One can recognise an MGS-like domain in the interval 1–147 (MSVIKRALIS…KNWKHVAIVT (147 aa)).

The protein belongs to the PurH family.

The enzyme catalyses (6R)-10-formyltetrahydrofolate + 5-amino-1-(5-phospho-beta-D-ribosyl)imidazole-4-carboxamide = 5-formamido-1-(5-phospho-D-ribosyl)imidazole-4-carboxamide + (6S)-5,6,7,8-tetrahydrofolate. It carries out the reaction IMP + H2O = 5-formamido-1-(5-phospho-D-ribosyl)imidazole-4-carboxamide. The protein operates within purine metabolism; IMP biosynthesis via de novo pathway; 5-formamido-1-(5-phospho-D-ribosyl)imidazole-4-carboxamide from 5-amino-1-(5-phospho-D-ribosyl)imidazole-4-carboxamide (10-formyl THF route): step 1/1. Its pathway is purine metabolism; IMP biosynthesis via de novo pathway; IMP from 5-formamido-1-(5-phospho-D-ribosyl)imidazole-4-carboxamide: step 1/1. The chain is Bifunctional purine biosynthesis protein PurH from Neisseria gonorrhoeae (strain NCCP11945).